Here is a 527-residue protein sequence, read N- to C-terminus: T-complex protein 1 subunit delta (527 aa).

It belongs to the TCP-1 chaperonin family. In terms of assembly, heterooligomeric complex of about 850 to 900 kDa that forms two stacked rings, 12 to 16 nm in diameter.

It localises to the cytoplasm. Molecular chaperone; assists the folding of proteins upon ATP hydrolysis. Known to play a role, in vitro, in the folding of actin and tubulin. In Schizosaccharomyces pombe (strain 972 / ATCC 24843) (Fission yeast), this protein is T-complex protein 1 subunit delta (cct4).